The sequence spans 570 residues: Hydroxylamine reductase (570 aa).

[4Fe-4S] cluster contacts are provided by Cys5, Cys8, Cys17, and Cys23. Hybrid [4Fe-2O-2S] cluster-binding residues include His266, Glu290, Cys334, Cys425, Cys453, Cys478, Glu513, and Lys515. Cys425 is subject to Cysteine persulfide.

This sequence belongs to the HCP family. It depends on [4Fe-4S] cluster as a cofactor. The cofactor is hybrid [4Fe-2O-2S] cluster.

Its subcellular location is the cytoplasm. The enzyme catalyses A + NH4(+) + H2O = hydroxylamine + AH2 + H(+). Catalyzes the reduction of hydroxylamine to form NH(3) and H(2)O. This is Hydroxylamine reductase from Clostridium botulinum (strain 657 / Type Ba4).